Consider the following 134-residue polypeptide: Profilin-4 (134 aa).

Cysteines 13 and 118 form a disulfide. The Involved in PIP2 interaction motif lies at 84–100 (AVIRGKKGSGGITIKKT). Thr-114 bears the Phosphothreonine mark.

It belongs to the profilin family. Occurs in many kinds of cells as a complex with monomeric actin in a 1:1 ratio. Phosphorylated by MAP kinases.

The protein resides in the cytoplasm. Its subcellular location is the cytoskeleton. Functionally, binds to actin and affects the structure of the cytoskeleton. At high concentrations, profilin prevents the polymerization of actin, whereas it enhances it at low concentrations. This Olea europaea (Common olive) protein is Profilin-4.